The primary structure comprises 687 residues: MEELVGLREGFSGDPVTLQELWGPCPHIRRAIQGGLEWLKQKVFRLGEDWYFLMTLGVLMALVSYAMNFAIGCVVRAHQWLYREIGDSHLLRYLSWTVYPVALVSFSSGFSQSITPSSGGSGIPELKTMLAGVILEDYLDIKNFGAKVVGLSCTLATGSTLFLGKVGPFVHLSVMIAAYLGRVRTTTIGEPENKSKQNEMLVAAAAVGVATVFAAPFSGVLFSIEVMSSHFSVRDYWRGFFAATCGAFIFRLLAVFNSEQETITSLYKTSFRVDVPFDLPEIFFFVALGGICGVLSCAYLFCQRTFLSFIKTNRYSSKLLATSKPVYSALATLLLASITYPPGVGHFLASRLSMKQHLDSLFDNHSWALMTQNSSPPWPEELDPQHLWWEWYHPRFTIFGTLAFFLVMKFWMLILATTIPMPAGYFMPIFILGAAIGRLLGEALAVAFPEGIVTGGVTNPIMPGGYALAGAAAFSGAVTHTISTALLAFELTGQIVHALPVLMAVLAANAIAQSCQPSFYDGTIIVKKLPYLPRILGRNIGSHHVRVEHFMNHSITTLAKDTPLEEVVKVVTSTDVTEYPLVESTESQILVGIVQRAQLVQALQAEPPSRAPGHQQCLQDILARGCPTEPVTLTLFSETTLHQAQNLFKLLNLQSLFVTSRGRAVGCVSWVEMKKAISNLTNPPAPK.

The next 4 helical transmembrane spans lie at 52–72 (FLMT…FAIG), 161–181 (LFLG…AYLG), 202–222 (VAAA…GVLF), and 236–256 (YWRG…LAVF). The Ca(2+) site is built by Glu-259, Glu-261, Asp-278, and Glu-281. Transmembrane regions (helical) follow at residues 282 to 302 (IFFF…YLFC), 329 to 349 (ALAT…HFLA), 396 to 416 (FTIF…LILA), 417 to 437 (TTIP…AAIG), 452 to 472 (IVTG…AGAA), and 486 to 506 (LLAF…MAVL). The Cytoplasmic portion of the chain corresponds to 507–687 (AANAIAQSCQ…SNLTNPPAPK (181 aa)). CBS domains follow at residues 551 to 609 (MNHS…EPPS) and 626 to 684 (CPTE…TNPP).

It belongs to the chloride channel (TC 2.A.49) family. CLCNKA subfamily. As to quaternary structure, homodimer. Interacts with BSND.

Its subcellular location is the basolateral cell membrane. The catalysed reaction is chloride(in) = chloride(out). The enzyme catalyses bromide(in) = bromide(out). It carries out the reaction nitrate(in) = nitrate(out). It catalyses the reaction iodide(out) = iodide(in). Activated by extracellular Ca(2+) and inhibited by extracellular acidic pH. Its function is as follows. Anion-selective channel permeable to small monovalent anions with ion selectivity for chloride &gt; bromide &gt; nitrate &gt; iodide. Forms a homodimeric channel where each subunit has its own ion conduction pathway. May conduct double-barreled currents controlled by two types of gates, two fast gates that control each subunit independently and a slow common gate that opens and shuts off both subunits simultaneously. Assembles with the regulatory subunit BSND/Barttin for sorting at the basolateral plasma membrane domain and functional switch to the ion conducting state. CLCNKA:BSND channels display mostly a linear current-voltage relationship with fast gating at negative potentials. Mediates transepithelial chloride transport from the lumen to interstitial compartment along the thin ascending limb of Henle's loop, contributing to generation of hypertonic medullary interstitium as a countercurrent system to achieve urine concentration. Conducts chloride currents in the stria vascularis of the inner ear to establish the endocochlear potential necessary for normal hearing. This Homo sapiens (Human) protein is Chloride channel protein ClC-Ka.